Here is a 296-residue protein sequence, read N- to C-terminus: Large ribosomal subunit protein uL15m (296 aa).

A mitochondrion-targeting transit peptide spans 1 to 20 (MSLIKKPGGKTIEVVKNLPR). Positions 25-59 (NLRPNPGAKTLEKRRGRGMHGGNRSGWGHKGERQR) are disordered.

The protein belongs to the universal ribosomal protein uL15 family. Component of the mitochondrial ribosome large subunit (39S) which comprises a 16S rRNA and about 50 distinct proteins.

The protein resides in the mitochondrion. This chain is Large ribosomal subunit protein uL15m (mrpl15), found in Danio rerio (Zebrafish).